Consider the following 190-residue polypeptide: UPF0301 protein Pfl01_5311 (190 aa).

It belongs to the UPF0301 (AlgH) family.

This Pseudomonas fluorescens (strain Pf0-1) protein is UPF0301 protein Pfl01_5311.